The following is a 942-amino-acid chain: Isoleucine--tRNA ligase (942 aa).

The 'HIGH' region motif lies at 58–68 (PYANGDIHIGH). E566 is an L-isoleucyl-5'-AMP binding site. The 'KMSKS' region motif lies at 607 to 611 (KMSKS). K610 provides a ligand contact to ATP. 4 residues coordinate Zn(2+): C905, C908, C925, and C928.

Belongs to the class-I aminoacyl-tRNA synthetase family. IleS type 1 subfamily. In terms of assembly, monomer. The cofactor is Zn(2+).

It localises to the cytoplasm. It catalyses the reaction tRNA(Ile) + L-isoleucine + ATP = L-isoleucyl-tRNA(Ile) + AMP + diphosphate. Catalyzes the attachment of isoleucine to tRNA(Ile). As IleRS can inadvertently accommodate and process structurally similar amino acids such as valine, to avoid such errors it has two additional distinct tRNA(Ile)-dependent editing activities. One activity is designated as 'pretransfer' editing and involves the hydrolysis of activated Val-AMP. The other activity is designated 'posttransfer' editing and involves deacylation of mischarged Val-tRNA(Ile). This chain is Isoleucine--tRNA ligase, found in Vibrio parahaemolyticus serotype O3:K6 (strain RIMD 2210633).